The chain runs to 602 residues: Bifunctional xylanase/deacetylase (602 aa).

Positions 1–14 (MSATLLVPSMTVKA) are cleaved as a signal peptide. Residues 17–211 (TIYNNKTGNQ…SSGSASVYKN (195 aa)) form the GH11 domain. E108 acts as the Nucleophile in catalysis. E198 serves as the catalytic Proton donor. The tract at residues 216–240 (GGSSSSSGNQGGNQGGNTGNENAGN) is disordered. Residues 224-233 (NQGGNQGGNT) are compositionally biased toward gly residues. A CBM6 domain is found at 249 to 366 (DKIQCETMTK…DAYLDYFNNS (118 aa)). One can recognise a NodB homology domain in the interval 402–578 (KLIALTFDDG…GLKNQGYTFV (177 aa)).

It belongs to the glycosyl hydrolase 11 (cellulase G) family. Post-translationally, in the later growth phases, seems to undergo a proteolytic cleavage into a 30 kDa protein possessing xylanolytic activity.

It localises to the secreted. The enzyme catalyses Endohydrolysis of (1-&gt;4)-beta-D-xylosidic linkages in xylans.. The protein operates within glycan degradation; xylan degradation. Its function is as follows. Endo-acting xylanase which specifically cleaves internal linkages on the xylan backbone, releasing xylooligosaccharides. Is also probably able, via its C-terminal domain, to remove acetyl groups from acetylated xylan, and thus it is probably capable of hydrolyzing acetylated xylan. The protein is Bifunctional xylanase/deacetylase (xyn11A) of Pseudobutyrivibrio xylanivorans.